The following is a 467-amino-acid chain: Pancreatic lipase-related protein 3 (467 aa).

An N-terminal signal peptide occupies residues 1–17 (MLGIWIVAFLFFGTSRG). C21 and C27 are disulfide-bonded. N74 is a glycosylation site (N-linked (GlcNAc...) asparagine). An intrachain disulfide couples C107 to C118. N125 carries N-linked (GlcNAc...) asparagine glycosylation. S168 functions as the Nucleophile in the catalytic mechanism. The Charge relay system role is filled by D191. An intrachain disulfide couples C252 to C277. H279 functions as the Charge relay system in the catalytic mechanism. Intrachain disulfides connect C301–C312, C315–C320, and C451–C467. The region spanning 355 to 467 (WRHKLSVKLS…PNILQNLKPC (113 aa)) is the PLAT domain.

It belongs to the AB hydrolase superfamily. Lipase family. As to expression, overexpressed in hepatocellular carcinoma.

It localises to the secreted. The enzyme catalyses a triacylglycerol + H2O = a diacylglycerol + a fatty acid + H(+). The chain is Pancreatic lipase-related protein 3 (PNLIPRP3) from Homo sapiens (Human).